The following is a 104-amino-acid chain: Putative ankyrin repeat protein L677 (104 aa).

3 ANK repeats span residues 16 to 43 (FNKS…NPNL), 44 to 73 (DISH…SNSV), and 75 to 102 (LEAY…NKSI).

The sequence is that of Putative ankyrin repeat protein L677 from Acanthamoeba polyphaga (Amoeba).